The following is a 309-amino-acid chain: MSNELPAVICLVGPTGAGKTAAALHLAERFAGTVINADSRQVYRDFPIITAQPTAEEQAQCPHRLYGFLETEARMSAGVWGDHATAAIDEALAQGRLPLLVGGTGMYVRALLDGIAAIPAIPRDIHVRWQERCAAEGPQRLHAMLCDIDAEYAARIHPNDRQRVTRALEVHEHTGRTFSEWHRSAMPAPRYRALRIGFAATLDALTPRLAHRIDLMLAAGALDEARRARVHCDDPSAPGWSGIGCAETYAHLVGSLDYEAMRHVWLHNTRAYAKRQLTWFRADTRLTWYAPDDVEGIALGVASFLRGGA.

Position 13 to 20 (13 to 20 (GPTGAGKT)) interacts with ATP. Substrate is bound at residue 15–20 (TGAGKT). 2 interaction with substrate tRNA regions span residues 38–41 (DSRQ) and 162–166 (QRVTR).

This sequence belongs to the IPP transferase family. As to quaternary structure, monomer. The cofactor is Mg(2+).

The enzyme catalyses adenosine(37) in tRNA + dimethylallyl diphosphate = N(6)-dimethylallyladenosine(37) in tRNA + diphosphate. Catalyzes the transfer of a dimethylallyl group onto the adenine at position 37 in tRNAs that read codons beginning with uridine, leading to the formation of N6-(dimethylallyl)adenosine (i(6)A). This is tRNA dimethylallyltransferase from Nitratidesulfovibrio vulgaris (strain ATCC 29579 / DSM 644 / CCUG 34227 / NCIMB 8303 / VKM B-1760 / Hildenborough) (Desulfovibrio vulgaris).